The primary structure comprises 370 residues: D-alanine--D-alanine ligase (370 aa).

One can recognise an ATP-grasp domain in the interval 144–352 (KKIFADAGIP…YGALIERLVD (209 aa)). 177–232 (EEVLTYPVFVKPANLGSSVGISKATNKTELIEAMTEAFLYDRRVVVEQGVVAREIE) lines the ATP pocket. The Mg(2+) site is built by aspartate 306, glutamate 319, and asparagine 321.

The protein belongs to the D-alanine--D-alanine ligase family. Mg(2+) is required as a cofactor. Requires Mn(2+) as cofactor.

It localises to the cytoplasm. It catalyses the reaction 2 D-alanine + ATP = D-alanyl-D-alanine + ADP + phosphate + H(+). The protein operates within cell wall biogenesis; peptidoglycan biosynthesis. Cell wall formation. This chain is D-alanine--D-alanine ligase, found in Listeria innocua serovar 6a (strain ATCC BAA-680 / CLIP 11262).